A 737-amino-acid chain; its full sequence is Propionyl-CoA carboxylase alpha chain, mitochondrial (737 aa).

Residues 1–61 (MAGLWVRTVA…QCLVVSRSLS (61 aa)) constitute a mitochondrion transit peptide. Positions 71–518 (TFDKILIANR…STKFLSDVYP (448 aa)) constitute a Biotin carboxylation domain. K74 is subject to N6-acetyllysine; alternate. K74 is subject to N6-succinyllysine; alternate. N6-succinyllysine is present on K128. K159 is subject to N6-acetyllysine; alternate. An N6-succinyllysine; alternate modification is found at K159. Residue K163 is modified to N6-acetyllysine. An ATP-binding site is contributed by K186. Residues 190–387 (KLLAKRAKVN…LVQEMILVAK (198 aa)) enclose the ATP-grasp domain. K197 is subject to N6-succinyllysine. The residue at position 209 (K209) is an N6-acetyllysine; alternate. K209 carries the N6-succinyllysine; alternate modification. ATP-binding positions include 218-279 (AREI…PRHI), E270, and N305. S261 carries the phosphoserine modification. An N6-succinyllysine modification is found at K271. The residue at position 337 (K337) is an N6-acetyllysine; alternate. K337 bears the N6-succinyllysine; alternate mark. Mg(2+) is bound by residues E345, E358, and N360. The Mn(2+) site is built by E345, E358, and N360. Residue R362 is part of the active site. N6-succinyllysine occurs at positions 394 and 416. F418 serves as a coordination point for biotin. The residue at position 505 (K505) is an N6-acetyllysine. An N6-succinyllysine mark is found at K511, K522, K567, and K657. In terms of domain architecture, Biotinyl-binding spans 658 to 737 (FMLEKVPKDT…GEGDLLVELE (80 aa)). Position 703 is an N6-biotinyllysine; by HLCS (K703).

The holoenzyme is a dodecamer composed of 6 PCCA/alpha subunits and 6 PCCB/beta subunits. Interacts (via the biotin carboxylation domain) with SIRT4. Interacts with SIRT3 and SIRT5. Biotin is required as a cofactor. The cofactor is Mg(2+). It depends on Mn(2+) as a cofactor. Post-translationally, acetylated. In terms of processing, the biotin cofactor is covalently attached to the C-terminal biotinyl-binding domain and is required for the catalytic activity. Biotinylation is catalyzed by HLCS.

Its subcellular location is the mitochondrion matrix. It carries out the reaction propanoyl-CoA + hydrogencarbonate + ATP = (S)-methylmalonyl-CoA + ADP + phosphate + H(+). The catalysed reaction is butanoyl-CoA + hydrogencarbonate + ATP = (2S)-ethylmalonyl-CoA + ADP + phosphate + H(+). It functions in the pathway metabolic intermediate metabolism; propanoyl-CoA degradation; succinyl-CoA from propanoyl-CoA: step 1/3. Functionally, this is one of the 2 subunits of the biotin-dependent propionyl-CoA carboxylase (PCC), a mitochondrial enzyme involved in the catabolism of odd chain fatty acids, branched-chain amino acids isoleucine, threonine, methionine, and valine and other metabolites. Propionyl-CoA carboxylase catalyzes the carboxylation of propionyl-CoA/propanoyl-CoA to D-methylmalonyl-CoA/(S)-methylmalonyl-CoA. Within the holoenzyme, the alpha subunit catalyzes the ATP-dependent carboxylation of the biotin carried by the biotin carboxyl carrier (BCC) domain, while the beta subunit then transfers the carboxyl group from carboxylated biotin to propionyl-CoA. Propionyl-CoA carboxylase also significantly acts on butyryl-CoA/butanoyl-CoA, which is converted to ethylmalonyl-CoA/(2S)-ethylmalonyl-CoA. Other alternative minor substrates include (2E)-butenoyl-CoA/crotonoyl-CoA. This chain is Propionyl-CoA carboxylase alpha chain, mitochondrial, found in Rattus norvegicus (Rat).